We begin with the raw amino-acid sequence, 476 residues long: Bifunctional protein HldE (476 aa).

The segment at methionine 1 to serine 319 is ribokinase. Position 195–198 (asparagine 195–glutamate 198) interacts with ATP. Residue aspartate 264 is part of the active site. A cytidylyltransferase region spans residues methionine 345 to glutamine 476.

The protein in the N-terminal section; belongs to the carbohydrate kinase PfkB family. In the C-terminal section; belongs to the cytidylyltransferase family. Homodimer.

It carries out the reaction D-glycero-beta-D-manno-heptose 7-phosphate + ATP = D-glycero-beta-D-manno-heptose 1,7-bisphosphate + ADP + H(+). The catalysed reaction is D-glycero-beta-D-manno-heptose 1-phosphate + ATP + H(+) = ADP-D-glycero-beta-D-manno-heptose + diphosphate. It functions in the pathway nucleotide-sugar biosynthesis; ADP-L-glycero-beta-D-manno-heptose biosynthesis; ADP-L-glycero-beta-D-manno-heptose from D-glycero-beta-D-manno-heptose 7-phosphate: step 1/4. Its pathway is nucleotide-sugar biosynthesis; ADP-L-glycero-beta-D-manno-heptose biosynthesis; ADP-L-glycero-beta-D-manno-heptose from D-glycero-beta-D-manno-heptose 7-phosphate: step 3/4. Functionally, catalyzes the phosphorylation of D-glycero-D-manno-heptose 7-phosphate at the C-1 position to selectively form D-glycero-beta-D-manno-heptose-1,7-bisphosphate. Its function is as follows. Catalyzes the ADP transfer from ATP to D-glycero-beta-D-manno-heptose 1-phosphate, yielding ADP-D-glycero-beta-D-manno-heptose. The sequence is that of Bifunctional protein HldE from Shewanella putrefaciens (strain CN-32 / ATCC BAA-453).